Here is a 370-residue protein sequence, read N- to C-terminus: tRNA-specific 2-thiouridylase MnmA (370 aa).

ATP-binding positions include 6 to 13 (AMSGGVDS) and Leu-32. Residue Cys-101 is the Nucleophile of the active site. Cys-101 and Cys-193 are oxidised to a cystine. ATP is bound at residue Gly-125. The interaction with tRNA stretch occupies residues 143–145 (KDQ). Cys-193 (cysteine persulfide intermediate) is an active-site residue.

This sequence belongs to the MnmA/TRMU family.

The protein localises to the cytoplasm. It catalyses the reaction S-sulfanyl-L-cysteinyl-[protein] + uridine(34) in tRNA + AH2 + ATP = 2-thiouridine(34) in tRNA + L-cysteinyl-[protein] + A + AMP + diphosphate + H(+). In terms of biological role, catalyzes the 2-thiolation of uridine at the wobble position (U34) of tRNA, leading to the formation of s(2)U34. This is tRNA-specific 2-thiouridylase MnmA from Rhodococcus erythropolis (strain PR4 / NBRC 100887).